A 20-amino-acid polypeptide reads, in one-letter code: C-reactive protein (20 aa).

Residues 1 to 20 (SPVAASYRATAGLAGKALDF) enclose the Pentraxin (PTX) domain.

This sequence belongs to the pentraxin family. In terms of assembly, homodimer; disulfide-linked. It is not known if it assembles into a pentraxin (or pentaxin) structure. Pentraxins have a discoid arrangement of 5 non-covalently bound subunits. In terms of processing, glycosylated.

The protein resides in the secreted. Its function is as follows. Displays several functions associated with host defense: it promotes agglutination, bacterial capsular swelling, phagocytosis, and complement fixation through its calcium-dependent binding to phosphorylcholine. This is C-reactive protein from Mustelus canis (Smooth dogfish).